The chain runs to 514 residues: Double-stranded RNA-binding protein 6 (514 aa).

DRBM domains are found at residues 1 to 70 and 87 to 155; these read MYKN…ALAR and VYKN…SLRQ. Disordered regions lie at residues 195–268 and 455–496; these read NNPH…SRFP and EASQ…KDDH. Composition is skewed to polar residues over residues 216-225, 249-263, and 473-484; these read FPQSSHSSYS, AASQ…SPNP, and SPDSLPKTQLKT.

Its function is as follows. Binds double-stranded RNA. The sequence is that of Double-stranded RNA-binding protein 6 (DRB6) from Oryza sativa subsp. japonica (Rice).